The primary structure comprises 177 residues: ATP-dependent protease subunit HslV (177 aa).

Thr-7 is an active-site residue. Na(+) is bound by residues Ala-162, Cys-165, and Thr-168.

Belongs to the peptidase T1B family. HslV subfamily. In terms of assembly, a double ring-shaped homohexamer of HslV is capped on each side by a ring-shaped HslU homohexamer. The assembly of the HslU/HslV complex is dependent on binding of ATP.

It is found in the cytoplasm. It catalyses the reaction ATP-dependent cleavage of peptide bonds with broad specificity.. With respect to regulation, allosterically activated by HslU binding. Functionally, protease subunit of a proteasome-like degradation complex believed to be a general protein degrading machinery. The sequence is that of ATP-dependent protease subunit HslV from Leptospira biflexa serovar Patoc (strain Patoc 1 / Ames).